The chain runs to 127 residues: MDNTLIDPRIIGKHVYGNLYEIPEEIAGDEEYLRNVVVEAAKLANMTLLEVKSWKLGGEKGGVSVIALVLESHIAIHTWINYRYATVDVYTCGEKSDPWRAFNYIVEKLKPKEYTVNYADRTQLLKQ.

Ser72 (schiff-base intermediate with substrate; via pyruvic acid) is an active-site residue. Ser72 is subject to Pyruvic acid (Ser); by autocatalysis. The active-site Proton acceptor; for processing activity is His77. Cys92 serves as the catalytic Proton donor; for catalytic activity.

It belongs to the prokaryotic AdoMetDC family. Type 1 subfamily. As to quaternary structure, heterooctamer of four alpha and four beta chains arranged as a tetramer of alpha/beta heterodimers. Requires pyruvate as cofactor. In terms of processing, is synthesized initially as an inactive proenzyme. Formation of the active enzyme involves a self-maturation process in which the active site pyruvoyl group is generated from an internal serine residue via an autocatalytic post-translational modification. Two non-identical subunits are generated from the proenzyme in this reaction, and the pyruvate is formed at the N-terminus of the alpha chain, which is derived from the carboxyl end of the proenzyme. The post-translation cleavage follows an unusual pathway, termed non-hydrolytic serinolysis, in which the side chain hydroxyl group of the serine supplies its oxygen atom to form the C-terminus of the beta chain, while the remainder of the serine residue undergoes an oxidative deamination to produce ammonia and the pyruvoyl group blocking the N-terminus of the alpha chain.

The catalysed reaction is L-arginine + H(+) = agmatine + CO2. It functions in the pathway amine and polyamine biosynthesis; agmatine biosynthesis; agmatine from L-arginine: step 1/1. Its function is as follows. Specifically catalyzes the decarboxylation of L-arginine to agmatine. Has no S-adenosylmethionine decarboxylase (AdoMetDC) activity. In Staphylothermus marinus (strain ATCC 43588 / DSM 3639 / JCM 9404 / F1), this protein is Arginine decarboxylase proenzyme.